The sequence spans 147 residues: uncharacterized protein (147 aa).

Positions 1–59 (MGAELVKWVKSHKIDAHIITFVAKMPYIDSIKLLEAGAKGCVWKTSHPAKLNRAIDSIS) constitute a Response regulatory domain. The HTH luxR-type domain occupies 78–143 (RYSSDNQLTN…ELIKTALRMG (66 aa)). Residues 102–121 (NKEIANFLQLSRKTVETHRL) constitute a DNA-binding region (H-T-H motif).

Overexpressed protein is phosphorylated in vitro by non-cognate histidine kinases BarA and UhpB.

This is an uncharacterized protein from Escherichia coli (strain K12).